The primary structure comprises 133 residues: Hydrogenase maturation factor HypA (133 aa).

A Ni(2+)-binding site is contributed by H2. Residues C73, C75, C105, and C108 each contribute to the Zn(2+) site.

The protein belongs to the HypA/HybF family.

Functionally, involved in the maturation of [NiFe] hydrogenases. Required for nickel insertion into the metal center of the hydrogenase. The chain is Hydrogenase maturation factor HypA from Methanosarcina acetivorans (strain ATCC 35395 / DSM 2834 / JCM 12185 / C2A).